Consider the following 611-residue polypeptide: Phosphoenolpyruvate carboxykinase [GTP] (611 aa).

Substrate contacts are provided by residues R82 and 222–224; that span reads YGG. 2 residues coordinate Mn(2+): K231 and H251. Residue S273 participates in substrate binding. Residue 274–279 participates in GTP binding; that stretch reads ACGKTN. Residue C275 is part of the active site. Position 298 (D298) interacts with Mn(2+). Position 389–391 (389–391) interacts with substrate; it reads NSR. GTP is bound by residues R391, R422, and 517–520; that span reads FGDN.

Belongs to the phosphoenolpyruvate carboxykinase [GTP] family. As to quaternary structure, monomer. Requires Mn(2+) as cofactor.

The protein localises to the cytoplasm. It carries out the reaction oxaloacetate + GTP = phosphoenolpyruvate + GDP + CO2. It functions in the pathway carbohydrate biosynthesis; gluconeogenesis. Functionally, catalyzes the conversion of oxaloacetate (OAA) to phosphoenolpyruvate (PEP), the rate-limiting step in the metabolic pathway that produces glucose from lactate and other precursors derived from the citric acid cycle. The chain is Phosphoenolpyruvate carboxykinase [GTP] from Arthrobacter sp. (strain FB24).